We begin with the raw amino-acid sequence, 850 residues long: Rho guanine nucleotide exchange factor 33 (850 aa).

Composition is skewed to basic and acidic residues over residues 1–13 (MEKSKAKQGENEH) and 98–113 (EEMQQKIEQLQQEKRR). Disordered regions lie at residues 1 to 21 (MEKSKAKQGENEHMPVNNPST) and 98 to 209 (EEMQ…DENL). Residues 54-128 (LEEKVKSCRC…KAKKAQKEEH (75 aa)) adopt a coiled-coil conformation. The segment covering 130–149 (AQAGPASAPAPGSAPTQGSP) has biased composition (low complexity). Positions 164–175 (DFTNMLPSQNYE) are enriched in polar residues. Residues 273-448 (KRQTVALELL…RVFISHYTLL (176 aa)) enclose the DH domain. Disordered regions lie at residues 504-550 (EMLQ…WELE) and 702-850 (AAQA…WGWW). 2 stretches are compositionally biased toward low complexity: residues 510-520 (PSSSSSAPAVS) and 754-770 (APHGPAAAAAASRGAPR). At Arg766 the chain carries Omega-N-methylarginine. Polar residues predominate over residues 773 to 783 (FPQQRSQSEKQ). Over residues 784–806 (TYLEEMHLEDATRFCPKEERESE) the composition is skewed to basic and acidic residues. A compositionally biased stretch (basic residues) spans 826 to 835 (SFRKLFKKKN).

The chain is Rho guanine nucleotide exchange factor 33 (Arhgef33) from Mus musculus (Mouse).